The sequence spans 289 residues: MFARRCGRLANRFVRLKSTSATSPITYKALHANSPLPRCRIIEPPRATVPEAVSNIIMSTPFNRVQRPKRHVFNCLVQNEPGVLSRLSGILAARGFNIDSLVVCATEVENLSRMTIVLRGADEVVEQAKRQIEDIVSVWAVLDYTGTSMVERELLLAKVSLLGPDHFQEHFERSEKVAESTNAKAKSDGEGVMNANAALQLRASQLAAINQLTTLFHGRVADISTETIILELTATPDRVDNFLSLLRPYGVLEACRTGTSAMTRAPHSNEVTEEAEDDVEVEEVFLPPG.

At Ser-34 the chain carries Phosphoserine. The region spanning 72–149 (VFNCLVQNEP…AVLDYTGTSM (78 aa)) is the ACT domain.

The protein belongs to the acetolactate synthase small subunit family.

The protein resides in the cytoplasm. It functions in the pathway amino-acid biosynthesis; L-isoleucine biosynthesis; L-isoleucine from 2-oxobutanoate: step 1/4. It participates in amino-acid biosynthesis; L-valine biosynthesis; L-valine from pyruvate: step 1/4. Functionally, stimulates activity of the acetolactate synthase catalytic subunit ilv1. The polypeptide is Probable acetolactate synthase small subunit (Schizosaccharomyces pombe (strain 972 / ATCC 24843) (Fission yeast)).